Here is a 1415-residue protein sequence, read N- to C-terminus: DNA-directed RNA polymerase subunit beta'' (1415 aa).

The Zn(2+) site is built by cysteine 217, cysteine 291, cysteine 298, and cysteine 301.

Belongs to the RNA polymerase beta' chain family. RpoC2 subfamily. In terms of assembly, in plastids the minimal PEP RNA polymerase catalytic core is composed of four subunits: alpha, beta, beta', and beta''. When a (nuclear-encoded) sigma factor is associated with the core the holoenzyme is formed, which can initiate transcription. The cofactor is Zn(2+).

The protein resides in the plastid. It localises to the chloroplast. It carries out the reaction RNA(n) + a ribonucleoside 5'-triphosphate = RNA(n+1) + diphosphate. In terms of biological role, DNA-dependent RNA polymerase catalyzes the transcription of DNA into RNA using the four ribonucleoside triphosphates as substrates. This Phaeodactylum tricornutum (strain CCAP 1055/1) protein is DNA-directed RNA polymerase subunit beta''.